Reading from the N-terminus, the 215-residue chain is NAD(P)H-hydrate epimerase (215 aa).

A YjeF N-terminal domain is found at 8 to 212 (MYNIENKGHD…KIGIPPEAEE (205 aa)). 57–61 (NNGGD) serves as a coordination point for (6S)-NADPHX. 2 residues coordinate K(+): Asn-58 and Asp-124. (6S)-NADPHX-binding positions include 128–134 (GTGISGE), Tyr-139, and Asp-157. K(+) is bound at residue Ser-160.

Belongs to the NnrE/AIBP family. It depends on K(+) as a cofactor.

It catalyses the reaction (6R)-NADHX = (6S)-NADHX. The catalysed reaction is (6R)-NADPHX = (6S)-NADPHX. Functionally, catalyzes the epimerization of the S- and R-forms of NAD(P)HX, a damaged form of NAD(P)H that is a result of enzymatic or heat-dependent hydration. This is a prerequisite for the S-specific NAD(P)H-hydrate dehydratase to allow the repair of both epimers of NAD(P)HX. The chain is NAD(P)H-hydrate epimerase from Nitrosopumilus maritimus (strain SCM1).